Reading from the N-terminus, the 141-residue chain is Small ribosomal subunit protein uS19 (141 aa).

The protein belongs to the universal ribosomal protein uS19 family.

Functionally, protein S19 forms a complex with S13 that binds strongly to the 16S ribosomal RNA. This chain is Small ribosomal subunit protein uS19, found in Thermofilum pendens (strain DSM 2475 / Hrk 5).